The chain runs to 141 residues: Large ribosomal subunit protein uL16 (141 aa).

A disordered region spans residues 1–23; the sequence is MLMPKRTKYRKQMKGRNRGKAHR.

It belongs to the universal ribosomal protein uL16 family. Part of the 50S ribosomal subunit.

Functionally, binds 23S rRNA and is also seen to make contacts with the A and possibly P site tRNAs. The sequence is that of Large ribosomal subunit protein uL16 from Helicobacter pylori (strain P12).